A 185-amino-acid chain; its full sequence is NADH-quinone oxidoreductase subunit B (185 aa).

Residues cysteine 38, cysteine 39, cysteine 104, and cysteine 133 each contribute to the [4Fe-4S] cluster site. Basic and acidic residues predominate over residues alanine 165–alanine 176. The segment at alanine 165–serine 185 is disordered.

The protein belongs to the complex I 20 kDa subunit family. NDH-1 is composed of 14 different subunits. Subunits NuoB, C, D, E, F, and G constitute the peripheral sector of the complex. [4Fe-4S] cluster serves as cofactor.

The protein localises to the cell membrane. It carries out the reaction a quinone + NADH + 5 H(+)(in) = a quinol + NAD(+) + 4 H(+)(out). In terms of biological role, NDH-1 shuttles electrons from NADH, via FMN and iron-sulfur (Fe-S) centers, to quinones in the respiratory chain. The immediate electron acceptor for the enzyme in this species is believed to be ubiquinone. Couples the redox reaction to proton translocation (for every two electrons transferred, four hydrogen ions are translocated across the cytoplasmic membrane), and thus conserves the redox energy in a proton gradient. In Thermomicrobium roseum (strain ATCC 27502 / DSM 5159 / P-2), this protein is NADH-quinone oxidoreductase subunit B.